The primary structure comprises 456 residues: Exodeoxyribonuclease 7 large subunit (456 aa).

Residues 1–103 (MLPSQSPAIF…DYQIIVESMQ (103 aa)) form a binds ssDNA, also required to bind the small subunit region.

The protein belongs to the XseA family. As to quaternary structure, heterooligomer composed of two different subunits with an approximate ratio of 4:1 for small to large subunit. Also estimated to have a 6:1 ration for small to large subunits. Does not require a metal cofactor. serves as cofactor.

The protein resides in the cytoplasm. The catalysed reaction is Exonucleolytic cleavage in either 5'- to 3'- or 3'- to 5'-direction to yield nucleoside 5'-phosphates.. In terms of biological role, bidirectionally degrades single-stranded DNA into large acid-insoluble oligonucleotides, which are then degraded further into small acid-soluble oligonucleotides. It can degrade 3' or 5' ss regions extending from the termini of duplex DNA molecules and displaced ss regions. It can also excise thymine dimers in vitro. ssDNA-binding requires both subunits. Required for production of the mature 5'-end of retron Ec78 or Ec83 msDNA. Overproduction of this subunit in the absence of an equivalent quantity of the small subunit is toxic, causing cell elongation and chromosome fragmentation or loss; its toxicity is mostly suppressed by RecA. This Escherichia coli (strain K12) protein is Exodeoxyribonuclease 7 large subunit.